Consider the following 69-residue polypeptide: Light-harvesting protein B-870 beta chain (69 aa).

The propeptide occupies 1–2 (MA). Over 3–22 (EVKQESLSGITEGEAKEFHK) the chain is Cytoplasmic. 2 residues coordinate a bacteriochlorophyll: His21 and His39. A helical transmembrane segment spans residues 23-45 (IFTSSILVFFGVAAFAHLLVWIW). Over 46 to 56 (RPWVPGPNGYS) the chain is Periplasmic. Positions 57–69 (ALETLTQTLTYLS) are excised as a propeptide.

The protein belongs to the antenna complex beta subunit family. In terms of assembly, the core complex is formed by different alpha and beta chains, binding bacteriochlorophyll molecules, and arranged most probably in tetrameric structures disposed around the reaction center. The non-pigmented gamma chains may constitute additional components.

Its subcellular location is the cell inner membrane. Functionally, antenna complexes are light-harvesting systems, which transfer the excitation energy to the reaction centers. The protein is Light-harvesting protein B-870 beta chain of Rhodospirillum rubrum (strain ATCC 11170 / ATH 1.1.1 / DSM 467 / LMG 4362 / NCIMB 8255 / S1).